We begin with the raw amino-acid sequence, 405 residues long: Imidazolonepropionase (405 aa).

Fe(3+) is bound by residues histidine 73 and histidine 75. Residues histidine 73 and histidine 75 each coordinate Zn(2+). The 4-imidazolone-5-propanoate site is built by arginine 82, tyrosine 145, and histidine 178. Position 145 (tyrosine 145) interacts with N-formimidoyl-L-glutamate. Residue histidine 243 coordinates Fe(3+). Histidine 243 is a binding site for Zn(2+). Residue glutamine 246 participates in 4-imidazolone-5-propanoate binding. Aspartate 318 contributes to the Fe(3+) binding site. Aspartate 318 provides a ligand contact to Zn(2+). Asparagine 320 and glycine 322 together coordinate N-formimidoyl-L-glutamate. 4-imidazolone-5-propanoate is bound at residue threonine 323.

It belongs to the metallo-dependent hydrolases superfamily. HutI family. It depends on Zn(2+) as a cofactor. The cofactor is Fe(3+).

It localises to the cytoplasm. The enzyme catalyses 4-imidazolone-5-propanoate + H2O = N-formimidoyl-L-glutamate. It participates in amino-acid degradation; L-histidine degradation into L-glutamate; N-formimidoyl-L-glutamate from L-histidine: step 3/3. Its function is as follows. Catalyzes the hydrolytic cleavage of the carbon-nitrogen bond in imidazolone-5-propanoate to yield N-formimidoyl-L-glutamate. It is the third step in the universal histidine degradation pathway. The sequence is that of Imidazolonepropionase from Brucella abortus (strain S19).